Here is a 362-residue protein sequence, read N- to C-terminus: Neutral protease 2 homolog MEP2 (362 aa).

The N-terminal stretch at 1–19 (MLFPSIVAALAALANPVLS) is a signal peptide. The propeptide occupies 20–177 (LTIPQATGSE…SKAINPISAR (158 aa)). Cystine bridges form between Cys-184/Cys-255 and Cys-262/Cys-280. His-304 is a binding site for Zn(2+). Glu-305 is an active-site residue. Positions 308 and 319 each coordinate Zn(2+).

It belongs to the peptidase M35 family. Zn(2+) is required as a cofactor.

It localises to the secreted. The catalysed reaction is Preferential cleavage of bonds with hydrophobic residues in P1'. Also 3-Asn-|-Gln-4 and 8-Gly-|-Ser-9 bonds in insulin B chain.. In terms of biological role, secreted metalloproteinase that allows assimilation of proteinaceous substrates. Shows high activities on basic nuclear substrates such as histone and protamine. May be involved in virulence. The chain is Neutral protease 2 homolog MEP2 (MEP2) from Coccidioides posadasii (strain C735) (Valley fever fungus).